The chain runs to 350 residues: Fe(2+) transport protein 2 (350 aa).

The signal sequence occupies residues 1 to 21; the sequence is MATTKLVYILLILFTFTVSPA. Residues 22–47 are Extracellular-facing; that stretch reads ISTAPEHCDSGFDNPCINKAKALPLK. A helical transmembrane segment spans residues 48-68; that stretch reads IVAIVAILTTSLIGVTSPLFS. The Cytoplasmic segment spans residues 69–80; it reads RYISFLRPDGNG. The chain crosses the membrane as a helical span at residues 81-101; that stretch reads FMIVKCFSSGIILGTGFMHVL. The Extracellular segment spans residues 102 to 120; the sequence is PDSFEMLSSKCLSDNPWHK. The chain crosses the membrane as a helical span at residues 121–141; sequence FPFAGFVAMMSGLVTLAIDSI. Residues 142-195 are Cytoplasmic-facing; sequence TTSLYTGKNSVGPVPDEEYGIDQEKAIHMVGHNHSHGHGVVLATKDDGQLLRYQ. A helical membrane pass occupies residues 196-216; that stretch reads VIAMVLEVGILFHSVVIGLSL. At 217 to 227 the chain is on the extracellular side; sequence GATNDSCTIKG. A helical transmembrane segment spans residues 228-248; that stretch reads LIIALCFHHLFEGIGLGGCIL. Residues 249 to 257 lie on the Cytoplasmic side of the membrane; sequence QADFTNVKK. Residues 258–278 form a helical membrane-spanning segment; sequence FLMAFFFTGTTPCGIFLGIAL. Over 279 to 289 the chain is Extracellular; the sequence is SSIYRDNSPTA. A helical transmembrane segment spans residues 290 to 310; it reads LITIGLLNACSAGMLIYMALV. Residues 311–329 lie on the Cytoplasmic side of the membrane; the sequence is DLLATEFMGSMLQGSIKLQ. Residues 330–350 form a helical membrane-spanning segment; sequence IKCFTAALLGCAVMSVVAVWA.

This sequence belongs to the ZIP transporter (TC 2.A.5) family. Expressed in the external cell layers of the root subapical zone.

The protein resides in the cell membrane. In terms of biological role, high-affinity iron transporter that mediates under iron-deficiency the iron uptake from the rhizosphere across the plasma membrane in the root epidermal layer. Could also be capable of transporting zinc ions. The chain is Fe(2+) transport protein 2 (IRT2) from Arabidopsis thaliana (Mouse-ear cress).